We begin with the raw amino-acid sequence, 332 residues long: Ketol-acid reductoisomerase (NADP(+)) 1 (332 aa).

Positions 2–182 (AELFYDADAD…GGTRAGVIKT (181 aa)) constitute a KARI N-terminal Rossmann domain. NADP(+) contacts are provided by residues 25-28 (YGSQ), Ser-51, Ser-53, and 83-86 (DPIQ). The active site involves His-108. Gly-134 contributes to the NADP(+) binding site. Residues 183–328 (TFTEETETDL…KELRKLMSWV (146 aa)) enclose the KARI C-terminal knotted domain. 4 residues coordinate Mg(2+): Asp-191, Glu-195, Glu-227, and Glu-231. Ser-252 provides a ligand contact to substrate.

The protein belongs to the ketol-acid reductoisomerase family. Mg(2+) serves as cofactor.

It catalyses the reaction (2R)-2,3-dihydroxy-3-methylbutanoate + NADP(+) = (2S)-2-acetolactate + NADPH + H(+). The catalysed reaction is (2R,3R)-2,3-dihydroxy-3-methylpentanoate + NADP(+) = (S)-2-ethyl-2-hydroxy-3-oxobutanoate + NADPH + H(+). It functions in the pathway amino-acid biosynthesis; L-isoleucine biosynthesis; L-isoleucine from 2-oxobutanoate: step 2/4. Its pathway is amino-acid biosynthesis; L-valine biosynthesis; L-valine from pyruvate: step 2/4. Functionally, involved in the biosynthesis of branched-chain amino acids (BCAA). Catalyzes an alkyl-migration followed by a ketol-acid reduction of (S)-2-acetolactate (S2AL) to yield (R)-2,3-dihydroxy-isovalerate. In the isomerase reaction, S2AL is rearranged via a Mg-dependent methyl migration to produce 3-hydroxy-3-methyl-2-ketobutyrate (HMKB). In the reductase reaction, this 2-ketoacid undergoes a metal-dependent reduction by NADPH to yield (R)-2,3-dihydroxy-isovalerate. The chain is Ketol-acid reductoisomerase (NADP(+)) 1 from Streptomyces coelicolor (strain ATCC BAA-471 / A3(2) / M145).